The sequence spans 181 residues: Large ribosomal subunit protein uL5 (181 aa).

This sequence belongs to the universal ribosomal protein uL5 family. As to quaternary structure, part of the 50S ribosomal subunit; part of the 5S rRNA/L5/L18/L25 subcomplex. Contacts the 5S rRNA and the P site tRNA. Forms a bridge to the 30S subunit in the 70S ribosome.

In terms of biological role, this is one of the proteins that bind and probably mediate the attachment of the 5S RNA into the large ribosomal subunit, where it forms part of the central protuberance. In the 70S ribosome it contacts protein S13 of the 30S subunit (bridge B1b), connecting the 2 subunits; this bridge is implicated in subunit movement. Contacts the P site tRNA; the 5S rRNA and some of its associated proteins might help stabilize positioning of ribosome-bound tRNAs. This is Large ribosomal subunit protein uL5 from Helicobacter pylori (strain HPAG1).